The following is a 93-amino-acid chain: YcgL domain-containing protein VSAL_I1068 (93 aa).

The 84-residue stretch at 1–84 (MYCSIYKSSK…PPENLLEKYK (84 aa)) folds into the YcgL domain.

The protein is YcgL domain-containing protein VSAL_I1068 of Aliivibrio salmonicida (strain LFI1238) (Vibrio salmonicida (strain LFI1238)).